The primary structure comprises 907 residues: Protein translocase subunit SecA (907 aa).

Residues Q87, 105–109 (GEGKT), and D510 each bind ATP. Zn(2+) contacts are provided by C892, C894, C903, and H904.

Belongs to the SecA family. Monomer and homodimer. Part of the essential Sec protein translocation apparatus which comprises SecA, SecYEG and auxiliary proteins SecDF-YajC and YidC. Zn(2+) is required as a cofactor.

The protein localises to the cell inner membrane. It localises to the cytoplasm. The enzyme catalyses ATP + H2O + cellular proteinSide 1 = ADP + phosphate + cellular proteinSide 2.. Functionally, part of the Sec protein translocase complex. Interacts with the SecYEG preprotein conducting channel. Has a central role in coupling the hydrolysis of ATP to the transfer of proteins into and across the cell membrane, serving both as a receptor for the preprotein-SecB complex and as an ATP-driven molecular motor driving the stepwise translocation of polypeptide chains across the membrane. The protein is Protein translocase subunit SecA of Acinetobacter baumannii (strain ATCC 17978 / DSM 105126 / CIP 53.77 / LMG 1025 / NCDC KC755 / 5377).